Here is a 41-residue protein sequence, read N- to C-terminus: Large ribosomal subunit protein bL36 (41 aa).

The protein belongs to the bacterial ribosomal protein bL36 family.

This Rickettsia canadensis (strain McKiel) protein is Large ribosomal subunit protein bL36.